Consider the following 481-residue polypeptide: Argininosuccinate lyase (481 aa).

Belongs to the lyase 1 family. Argininosuccinate lyase subfamily.

The protein localises to the cytoplasm. The enzyme catalyses 2-(N(omega)-L-arginino)succinate = fumarate + L-arginine. It functions in the pathway amino-acid biosynthesis; L-arginine biosynthesis; L-arginine from L-ornithine and carbamoyl phosphate: step 3/3. The sequence is that of Argininosuccinate lyase from Methanococcus maripaludis (strain DSM 14266 / JCM 13030 / NBRC 101832 / S2 / LL).